An 846-amino-acid chain; its full sequence is Translation initiation factor IF-2 (846 aa).

The tract at residues 199–219 (KREEEEKKSKAKKAGGKGFKK) is disordered. The span at 207–219 (SKAKKAGGKGFKK) shows a compositional bias: basic residues. The 168-residue stretch at 345-512 (SRAPVVTIMG…AVLLQSEVLE (168 aa)) folds into the tr-type G domain. The G1 stretch occupies residues 354–361 (GHVDHGKT). 354-361 (GHVDHGKT) contributes to the GTP binding site. The interval 379-383 (GITQH) is G2. The interval 400–403 (DTPG) is G3. GTP-binding positions include 400 to 404 (DTPGH) and 454 to 457 (NKID). The tract at residues 454-457 (NKID) is G4. Residues 490–492 (SAK) form a G5 region.

The protein belongs to the TRAFAC class translation factor GTPase superfamily. Classic translation factor GTPase family. IF-2 subfamily.

The protein localises to the cytoplasm. One of the essential components for the initiation of protein synthesis. Protects formylmethionyl-tRNA from spontaneous hydrolysis and promotes its binding to the 30S ribosomal subunits. Also involved in the hydrolysis of GTP during the formation of the 70S ribosomal complex. This chain is Translation initiation factor IF-2, found in Francisella tularensis subsp. holarctica (strain LVS).